Consider the following 165-residue polypeptide: MAESFSFDVVSDFDRQELVNTLDQVKREISQRYDLKGTETSVDLDKENIFIITNSELTLNSVNDIIRQKAIKRNLSLKIFDYGEIEMVSGNRVKQTILLKQGIKQDIAKKISKNIRDQIKKINVSINGDTLRVASKSKNDLQFAIKLVSELEESLNIPLKANNFR.

It belongs to the YajQ family.

In terms of biological role, nucleotide-binding protein. This is Nucleotide-binding protein P9215_05621 from Prochlorococcus marinus (strain MIT 9215).